The primary structure comprises 265 residues: Indole-3-glycerol phosphate synthase (265 aa).

This sequence belongs to the TrpC family.

It catalyses the reaction 1-(2-carboxyphenylamino)-1-deoxy-D-ribulose 5-phosphate + H(+) = (1S,2R)-1-C-(indol-3-yl)glycerol 3-phosphate + CO2 + H2O. It participates in amino-acid biosynthesis; L-tryptophan biosynthesis; L-tryptophan from chorismate: step 4/5. This Syntrophobacter fumaroxidans (strain DSM 10017 / MPOB) protein is Indole-3-glycerol phosphate synthase.